The primary structure comprises 505 residues: Prenylcysteine oxidase 1 (505 aa).

The N-terminal stretch at 1–27 (MGRVVAELVSSLLGLWLLLCSCGCPEG) is a signal peptide. 3 N-linked (GlcNAc...) asparagine glycosylation sites follow: N196, N323, and N353.

Belongs to the prenylcysteine oxidase family. It depends on FAD as a cofactor.

The protein resides in the lysosome. The catalysed reaction is an S-polyprenyl-L-cysteine + O2 + H2O = a polyprenal + L-cysteine + H2O2. It catalyses the reaction S-(2E,6E)-farnesyl-L-cysteine + O2 + H2O = (2E,6E)-farnesal + L-cysteine + H2O2. The enzyme catalyses [(2E,6E,10E)-geranylgeranyl]-L-cysteine + O2 + H2O = (2E,6E,10E)-geranylgeranial + L-cysteine + H2O2. Prenylcysteine oxidase that cleaves the thioether bond of prenyl-L-cysteines, such as farnesylcysteine and geranylgeranylcysteine. Only active against free prenylcysteines and not prenylcysteine residues within prenylated proteins or peptides. Involved in the final step in the degradation of prenylated proteins, by degrading prenylcysteines after the protein has been degraded. In Pongo abelii (Sumatran orangutan), this protein is Prenylcysteine oxidase 1.